The sequence spans 152 residues: MTQTIAIDVRILPHGAGLPLPAYQTAHAAGMDLLAAVAPDAPVVLAPGSHAMVPTGLSIALPDGFEAQVRPRSGLAARHGVTVLNSPGTIDADYRGEVCVLLINHGKEPFTIQRGERIAQMVIASVVRAELAITTTLSETARGSGGFGSTGR.

Residues 72–74 (RSG), N85, and 89–91 (TID) each bind substrate.

Belongs to the dUTPase family. Mg(2+) is required as a cofactor.

It catalyses the reaction dUTP + H2O = dUMP + diphosphate + H(+). It participates in pyrimidine metabolism; dUMP biosynthesis; dUMP from dCTP (dUTP route): step 2/2. Functionally, this enzyme is involved in nucleotide metabolism: it produces dUMP, the immediate precursor of thymidine nucleotides and it decreases the intracellular concentration of dUTP so that uracil cannot be incorporated into DNA. This Bradyrhizobium sp. (strain ORS 278) protein is Deoxyuridine 5'-triphosphate nucleotidohydrolase.